The sequence spans 42 residues: uncharacterized protein (42 aa).

This is an uncharacterized protein from Pasteurella multocida (strain Pm70).